The primary structure comprises 632 residues: Probable potassium transport system protein Kup (632 aa).

The next 12 membrane-spanning stretches (helical) occupy residues 17-37 (LFYLTLGSIGVVYGDIGTSPL), 60-80 (LISLMIWALTIIVTIKYVLFL), 106-126 (TAILMLLGLLGAALFLGDAMI), 146-166 (LSEYIVPISVVILALLFVVQS), 175-195 (FFGPITAVWFLVMAAAGISHI), 210-230 (AVSFLLHEGFYGVVVLGAVFL), 254-274 (WFLLVFPSLTLNYLGQGALVL), 292-312 (ALLPVVILATAATIIASQAVI), 344-364 (IFVPSVNAVLFIGVIFLVLSF), 370-390 (LATAYGISVTGAMVVTSIMAF), 401-421 (LPVAVIALAPLVILELIFLGA), and 426-446 (IHDGGYIPILIATAFTVIMWT).

It belongs to the HAK/KUP transporter (TC 2.A.72) family.

It localises to the cell inner membrane. The catalysed reaction is K(+)(in) + H(+)(in) = K(+)(out) + H(+)(out). Functionally, transport of potassium into the cell. Likely operates as a K(+):H(+) symporter. This chain is Probable potassium transport system protein Kup, found in Rhizobium rhizogenes (Agrobacterium rhizogenes).